A 167-amino-acid polypeptide reads, in one-letter code: Methyl-coenzyme M reductase II operon protein D (167 aa).

As to quaternary structure, MCR is composed of three subunits: alpha, beta, and gamma. The function of protein D is not known.

This is Methyl-coenzyme M reductase II operon protein D (mrtD) from Methanocaldococcus jannaschii (strain ATCC 43067 / DSM 2661 / JAL-1 / JCM 10045 / NBRC 100440) (Methanococcus jannaschii).